We begin with the raw amino-acid sequence, 106 residues long: ATP-dependent Clp protease adapter protein ClpS (106 aa).

Belongs to the ClpS family. In terms of assembly, binds to the N-terminal domain of the chaperone ClpA.

In terms of biological role, involved in the modulation of the specificity of the ClpAP-mediated ATP-dependent protein degradation. The sequence is that of ATP-dependent Clp protease adapter protein ClpS from Photobacterium profundum (strain SS9).